A 1093-amino-acid chain; its full sequence is Semaphorin-5B (1093 aa).

The first 19 residues, 1–19 (MVVPGPLALSLLLSSLTLL), serve as a signal peptide directing secretion. The Extracellular portion of the chain corresponds to 20–978 (VSHLSSSQDI…TSCGGFNLIH (959 aa)). The Sema domain occupies 45–495 (HPIVAFEDLK…LSDRVLRVPL (451 aa)). 2 N-linked (GlcNAc...) asparagine glycosylation sites follow: Asn-59 and Asn-95. 2 disulfides stabilise this stretch: Cys-114/Cys-124 and Cys-141/Cys-150. Residues Asn-157, Asn-178, and Asn-287 are each glycosylated (N-linked (GlcNAc...) asparagine). Disulfide bonds link Cys-264/Cys-367 and Cys-288/Cys-330. Asn-333, Asn-378, Asn-532, Asn-539, Asn-547, and Asn-602 each carry an N-linked (GlcNAc...) asparagine glycan. TSP type-1 domains follow at residues 551–605 (DGGF…NCSR), 606–662 (NGAW…TPCP), 664–713 (PIFW…EACP), 721–776 (WTPW…ACDT), 795–850 (NGGW…QACP), 852–907 (RGAW…QACP), and 908–952 (EGWS…RPCP). 6 disulfides stabilise this stretch: Cys-618/Cys-655, Cys-622/Cys-661, Cys-633/Cys-645, Cys-676/Cys-707, Cys-680/Cys-712, and Cys-691/Cys-697. N-linked (GlcNAc...) asparagine glycosylation occurs at Asn-728. 6 disulfides stabilise this stretch: Cys-807/Cys-844, Cys-811/Cys-849, Cys-822/Cys-834, Cys-864/Cys-901, Cys-868/Cys-906, and Cys-879/Cys-891. Asn-944 carries N-linked (GlcNAc...) asparagine glycosylation. The helical transmembrane segment at 979–999 (LIVTGVSCFLVSGLLTLAVYL) threads the bilayer. Residues 1000-1093 (SCQHCQRQSQ…SPGQRCFPNS (94 aa)) lie on the Cytoplasmic side of the membrane.

Belongs to the semaphorin family. As to expression, in adult, only detected in brain.

The protein localises to the membrane. Functionally, may act as a positive axonal guidance cue. This chain is Semaphorin-5B (Sema5b), found in Mus musculus (Mouse).